The sequence spans 365 residues: S-adenosylmethionine decarboxylase proenzyme (365 aa).

Active-site residues include Glu31 and Glu34. The active-site Schiff-base intermediate with substrate; via pyruvic acid is the Ser87. The residue at position 87 (Ser87) is a Pyruvic acid (Ser); by autocatalysis. Cys101 acts as the Proton donor; for catalytic activity in catalysis. Active-site proton acceptor; for processing activity residues include Ser248 and His263.

This sequence belongs to the eukaryotic AdoMetDC family. Heterotetramer of two alpha and two beta chains. It depends on pyruvate as a cofactor. Is synthesized initially as an inactive proenzyme. Formation of the active enzyme involves a self-maturation process in which the active site pyruvoyl group is generated from an internal serine residue via an autocatalytic post-translational modification. Two non-identical subunits are generated from the proenzyme in this reaction, and the pyruvate is formed at the N-terminus of the alpha chain, which is derived from the carboxyl end of the proenzyme. The post-translation cleavage follows an unusual pathway, termed non-hydrolytic serinolysis, in which the side chain hydroxyl group of the serine supplies its oxygen atom to form the C-terminus of the beta chain, while the remainder of the serine residue undergoes an oxidative deamination to produce ammonia and the pyruvoyl group blocking the N-terminus of the alpha chain.

It carries out the reaction S-adenosyl-L-methionine + H(+) = S-adenosyl 3-(methylsulfanyl)propylamine + CO2. It functions in the pathway amine and polyamine biosynthesis; S-adenosylmethioninamine biosynthesis; S-adenosylmethioninamine from S-adenosyl-L-methionine: step 1/1. In Onchocerca volvulus, this protein is S-adenosylmethionine decarboxylase proenzyme (smd-1).